Reading from the N-terminus, the 470-residue chain is Ribulose bisphosphate carboxylase large chain (470 aa).

The substrate site is built by asparagine 118 and threonine 168. Lysine 170 (proton acceptor) is an active-site residue. Lysine 172 lines the substrate pocket. Mg(2+) is bound by residues lysine 196, aspartate 198, and glutamate 199. Lysine 196 bears the N6-carboxylysine mark. Histidine 289 functions as the Proton acceptor in the catalytic mechanism. Substrate is bound by residues arginine 290, histidine 322, and serine 374.

Belongs to the RuBisCO large chain family. Type I subfamily. Heterohexadecamer of 8 large chains and 8 small chains; disulfide-linked. The disulfide link is formed within the large subunit homodimers. RuBisCO interacts with the C-terminus of CcmM, and can be found in complexes that also include carbonic anhydrase (ccaA). RuBisCO associates with both the internal and shell portion of carboxysomes. The cofactor is Mg(2+). Post-translationally, the disulfide bond which can form in the large chain dimeric partners within the hexadecamer appears to be associated with oxidative stress and protein turnover.

It localises to the carboxysome. It catalyses the reaction 2 (2R)-3-phosphoglycerate + 2 H(+) = D-ribulose 1,5-bisphosphate + CO2 + H2O. The enzyme catalyses D-ribulose 1,5-bisphosphate + O2 = 2-phosphoglycolate + (2R)-3-phosphoglycerate + 2 H(+). In terms of biological role, ruBisCO catalyzes two reactions: the carboxylation of D-ribulose 1,5-bisphosphate, the primary event in carbon dioxide fixation, as well as the oxidative fragmentation of the pentose substrate in the photorespiration process. Both reactions occur simultaneously and in competition at the same active site. This chain is Ribulose bisphosphate carboxylase large chain, found in Synechocystis sp. (strain ATCC 27184 / PCC 6803 / Kazusa).